Consider the following 291-residue polypeptide: Pyridoxal 5'-phosphate synthase subunit PdxS (291 aa).

D23 contributes to the D-ribose 5-phosphate binding site. Catalysis depends on K80, which acts as the Schiff-base intermediate with D-ribose 5-phosphate. G152 serves as a coordination point for D-ribose 5-phosphate. R164 lines the D-glyceraldehyde 3-phosphate pocket. Residues G213 and 234 to 235 (GS) contribute to the D-ribose 5-phosphate site.

It belongs to the PdxS/SNZ family. In the presence of PdxT, forms a dodecamer of heterodimers.

It catalyses the reaction aldehydo-D-ribose 5-phosphate + D-glyceraldehyde 3-phosphate + L-glutamine = pyridoxal 5'-phosphate + L-glutamate + phosphate + 3 H2O + H(+). Its pathway is cofactor biosynthesis; pyridoxal 5'-phosphate biosynthesis. Catalyzes the formation of pyridoxal 5'-phosphate from ribose 5-phosphate (RBP), glyceraldehyde 3-phosphate (G3P) and ammonia. The ammonia is provided by the PdxT subunit. Can also use ribulose 5-phosphate and dihydroxyacetone phosphate as substrates, resulting from enzyme-catalyzed isomerization of RBP and G3P, respectively. The polypeptide is Pyridoxal 5'-phosphate synthase subunit PdxS (Desulfitobacterium hafniense (strain DSM 10664 / DCB-2)).